Reading from the N-terminus, the 160-residue chain is Large ribosomal subunit protein bL19 (160 aa).

This sequence belongs to the bacterial ribosomal protein bL19 family.

Functionally, this protein is located at the 30S-50S ribosomal subunit interface and may play a role in the structure and function of the aminoacyl-tRNA binding site. The sequence is that of Large ribosomal subunit protein bL19 from Prochlorococcus marinus subsp. pastoris (strain CCMP1986 / NIES-2087 / MED4).